We begin with the raw amino-acid sequence, 1209 residues long: Pre-mRNA-splicing factor rse1 (1209 aa).

It belongs to the RSE1 family. As to quaternary structure, associated with the spliceosome.

The protein resides in the nucleus. Functionally, involved in pre-mRNA splicing and cell cycle control. This is Pre-mRNA-splicing factor rse1 (msp-5) from Neurospora crassa (strain ATCC 24698 / 74-OR23-1A / CBS 708.71 / DSM 1257 / FGSC 987).